The sequence spans 215 residues: ATP-dependent Clp protease proteolytic subunit (215 aa).

Serine 116 acts as the Nucleophile in catalysis. The active site involves histidine 141.

Belongs to the peptidase S14 family. As to quaternary structure, fourteen ClpP subunits assemble into 2 heptameric rings which stack back to back to give a disk-like structure with a central cavity, resembling the structure of eukaryotic proteasomes.

Its subcellular location is the cytoplasm. The catalysed reaction is Hydrolysis of proteins to small peptides in the presence of ATP and magnesium. alpha-casein is the usual test substrate. In the absence of ATP, only oligopeptides shorter than five residues are hydrolyzed (such as succinyl-Leu-Tyr-|-NHMec, and Leu-Tyr-Leu-|-Tyr-Trp, in which cleavage of the -Tyr-|-Leu- and -Tyr-|-Trp bonds also occurs).. In terms of biological role, cleaves peptides in various proteins in a process that requires ATP hydrolysis. Has a chymotrypsin-like activity. Plays a major role in the degradation of misfolded proteins. This Psychrobacter cryohalolentis (strain ATCC BAA-1226 / DSM 17306 / VKM B-2378 / K5) protein is ATP-dependent Clp protease proteolytic subunit.